The following is a 354-amino-acid chain: Methylthioribose-1-phosphate isomerase (354 aa).

Residues 58–60, Arg-101, and Gln-204 contribute to the substrate site; that span reads RGA. Residue Asp-245 is the Proton donor of the active site. 255 to 256 is a binding site for substrate; it reads NK.

The protein belongs to the eIF-2B alpha/beta/delta subunits family. MtnA subfamily.

The catalysed reaction is 5-(methylsulfanyl)-alpha-D-ribose 1-phosphate = 5-(methylsulfanyl)-D-ribulose 1-phosphate. Its pathway is amino-acid biosynthesis; L-methionine biosynthesis via salvage pathway; L-methionine from S-methyl-5-thio-alpha-D-ribose 1-phosphate: step 1/6. Functionally, catalyzes the interconversion of methylthioribose-1-phosphate (MTR-1-P) into methylthioribulose-1-phosphate (MTRu-1-P). The protein is Methylthioribose-1-phosphate isomerase of Xylella fastidiosa (strain M12).